The primary structure comprises 180 residues: Nucleoside triphosphate/diphosphate phosphatase (180 aa).

Arg-26 functions as the Proton donor in the catalytic mechanism. Mg(2+) contacts are provided by Asn-90, Asp-106, Asp-108, Asp-110, Asp-123, and Glu-126.

This sequence belongs to the Ntdp family. Mg(2+) serves as cofactor.

The catalysed reaction is a ribonucleoside 5'-triphosphate + H2O = a ribonucleoside 5'-diphosphate + phosphate + H(+). It carries out the reaction a ribonucleoside 5'-diphosphate + H2O = a ribonucleoside 5'-phosphate + phosphate + H(+). Functionally, has nucleoside phosphatase activity towards nucleoside triphosphates and nucleoside diphosphates. This Staphylococcus aureus (strain MSSA476) protein is Nucleoside triphosphate/diphosphate phosphatase.